The chain runs to 241 residues: MAENQAKKEQVHTVFQNISQKYDRLNNIISFEQHKVWRKHVMSTMNVQKGSKALDVCCGTADWTIALSEAVGSKGQVTGLDFSENMLEVGKQKTASLENIQLVHGDAMNLPFDDNSFDYVTIGFGLRNVPDYLSALKEMHRVLKPGGMVVCLETSQPTLPLFKQIYSLYFKFVMPIFGKMFAKSKEEYEWLQQSTFNFPDKQTLKGLFFEAGFNDIIVRSFTGGVAAMHLGYKENSSSKGD.

Residues Thr60, Asp81, and 106 to 107 (DA) contribute to the S-adenosyl-L-methionine site.

This sequence belongs to the class I-like SAM-binding methyltransferase superfamily. MenG/UbiE family.

The enzyme catalyses a 2-demethylmenaquinol + S-adenosyl-L-methionine = a menaquinol + S-adenosyl-L-homocysteine + H(+). Its pathway is quinol/quinone metabolism; menaquinone biosynthesis; menaquinol from 1,4-dihydroxy-2-naphthoate: step 2/2. In terms of biological role, methyltransferase required for the conversion of demethylmenaquinol (DMKH2) to menaquinol (MKH2). This chain is Demethylmenaquinone methyltransferase, found in Staphylococcus epidermidis (strain ATCC 35984 / DSM 28319 / BCRC 17069 / CCUG 31568 / BM 3577 / RP62A).